Reading from the N-terminus, the 357-residue chain is GDP-mannose transporter 2 (357 aa).

Residues 1–33 lie on the Cytoplasmic side of the membrane; the sequence is MASARNGVSKDELLPVYERRSQRDGDISGSVKS. The chain crosses the membrane as a helical span at residues 34-54; sequence FASTIGNSASAAVLAYCLSSI. Over 55–68 the chain is Lumenal; the sequence is SMTLVNKYVVSGAS. The helical transmembrane segment at 69-89 threads the bilayer; the sequence is WNLSFLYLAMQSFIGTVAILA. The Cytoplasmic portion of the chain corresponds to 90-107; the sequence is CKKTGLIQNLALFDLKKA. The chain crosses the membrane as a helical span at residues 108–128; it reads QTWLPISLLLVGMIYTGNKAL. Gln129 is a topological domain (lumenal). A helical transmembrane segment spans residues 130-150; sequence FLSVPVYTIFKNLTIIVIAYG. Topologically, residues 151–161 are cytoplasmic; the sequence is EVLMVGGGVKP. Residues 162–181 form a helical membrane-spanning segment; the sequence is LALLSFGLMVLSSVVAAWAD. The Lumenal segment spans residues 182–196; the sequence is IQNATTATVGASSDS. N-linked (GlcNAc...) asparagine glycosylation is present at Asn184. Residues 197–217 traverse the membrane as a helical segment; it reads TAAALSALNAGYAWMGTNVIF. The Cytoplasmic segment spans residues 218 to 236; that stretch reads SASYALGMRRVIKKTNFDN. Residues 237-257 form a helical membrane-spanning segment; the sequence is WDVMFYNNLLSIPILLLASVL. Residues 258–277 lie on the Lumenal side of the membrane; sequence AEDWSSENLQRNFPAELRQS. Residues 278–298 form a helical membrane-spanning segment; it reads LFIGILYSGVAAVFISYCTAW. Topologically, residues 299 to 306 are cytoplasmic; the sequence is CVRATSST. Residues 307 to 327 form a helical membrane-spanning segment; the sequence is TYAMVGALNKLPLAVAGIVFF. The Lumenal segment spans residues 328–332; the sequence is AAPVT. The chain crosses the membrane as a helical span at residues 333–352; the sequence is FGSVSAIVLGFISGLVYARA. The Cytoplasmic portion of the chain corresponds to 353-357; the sequence is KSTGA.

Belongs to the TPT transporter family. SLC35D subfamily. In terms of assembly, homooligomer.

Its subcellular location is the golgi apparatus membrane. It localises to the cytoplasmic vesicle membrane. The protein localises to the endoplasmic reticulum membrane. Involved in the import of GDP-mannose from the cytoplasm into the Golgi lumen. This Neosartorya fischeri (strain ATCC 1020 / DSM 3700 / CBS 544.65 / FGSC A1164 / JCM 1740 / NRRL 181 / WB 181) (Aspergillus fischerianus) protein is GDP-mannose transporter 2 (gmt2).